Here is a 641-residue protein sequence, read N- to C-terminus: Putative phagocytic receptor 1a (641 aa).

The signal sequence occupies residues 1–23 (MKINKKQIVFFILFSIFLNHVNG). Topologically, residues 24–279 (IFYLPGMIPH…ESNDNSVHWF (256 aa)) are extracellular. Residues 280-300 (SILNSLMIVFILTVMVAMIII) form a helical membrane-spanning segment. Topologically, residues 301 to 349 (RTLKKDIRRYTSIDTSEDRDSQEETGWKMIHGDVFRPPSHPMLLSVCIG) are cytoplasmic. A helical transmembrane segment spans residues 350–370 (SGVQIFSMTLITMIFAVLGFL). Residues 371 to 374 (SPAN) lie on the Extracellular side of the membrane. The helical transmembrane segment at 375–395 (IGGLATALIVLFVLSAMFAGY) threads the bilayer. Over 396–413 (FSTRVFTIFKGRNWKKNT) the chain is Cytoplasmic. Residues 414-434 (IYTALSMPGIIFGIFFFVNMF) traverse the membrane as a helical segment. Over 435-445 (LRGAKSSAAVP) the chain is Extracellular. Residues 446–466 (FGTFASIIAMWFGISVPLVFL) form a helical membrane-spanning segment. Residues 467-502 (GSYFASKKPVPEDPVRTNQIPRQVPDQIWYMNPYLS) are Cytoplasmic-facing. The helical transmembrane segment at 503–523 (ILMGGILPFGAVFIELHFILT) threads the bilayer. The Extracellular portion of the chain corresponds to 524-532 (SLWDNQFYY). A helical transmembrane segment spans residues 533–553 (IFGFLFIVLMILIVTSAEISI). Over 554-578 (VMCYFQLCAEDHHWWWRSFLTAGSS) the chain is Cytoplasmic. Residues 579–599 (SLYMFIYSVSFFRYLGITKFI) form a helical membrane-spanning segment. Residues 600 to 608 (SSLLDFSYS) are Extracellular-facing. A helical transmembrane segment spans residues 609 to 629 (FIMSLAFAALTGTIGFYSCYF). Residues 630-641 (LVRKIYSSIHIN) are Cytoplasmic-facing.

This sequence belongs to the nonaspanin (TM9SF) (TC 9.A.2) family.

Its subcellular location is the membrane. Its function is as follows. Involved in adhesion, phagocytosis of hydrophilic particles and intracellular killing of bacteria. Associates with proteins harboring glycine-rich transmembrane domains and ensures their efficient localization to the cell surface. The polypeptide is Putative phagocytic receptor 1a (phg1a) (Dictyostelium discoideum (Social amoeba)).